A 244-amino-acid chain; its full sequence is MKIDLNADLGEGFASDSELLTLVSSANIACGFHAGDAQTMLTCVREALKNGVAIGAHPSFPDRDNFGRTAMVLPPETVYAQTLYQIGALGAIVQAQGGVMRHVKPHGMLYNQAAKDPRLAQAIAKAVHDYDSSLILVGLAGSELIRAGERYRLATRQEVFADRGYQADGSLVPRTQPGALILDEGQALAQTLGMVQAGRVKSVTGVWTNVTAQTVCIHGDGEYALAFARRLRAAFNARNIHVSF.

The protein belongs to the LamB/PxpA family. As to quaternary structure, forms a complex composed of PxpA, PxpB and PxpC.

It carries out the reaction 5-oxo-L-proline + ATP + 2 H2O = L-glutamate + ADP + phosphate + H(+). Functionally, catalyzes the cleavage of 5-oxoproline to form L-glutamate coupled to the hydrolysis of ATP to ADP and inorganic phosphate. In Salmonella arizonae (strain ATCC BAA-731 / CDC346-86 / RSK2980), this protein is 5-oxoprolinase subunit A.